Consider the following 299-residue polypeptide: HTH-type transcriptional regulator CysL (299 aa).

Positions 1–58 (MYYDVLKTFIAVVEEKNFTKAAEKLMISQPSVSLHIKNLEKEFQTALLNRSPKHFTTT) constitute an HTH lysR-type domain. The segment at residues 18-37 (FTKAAEKLMISQPSVSLHIK) is a DNA-binding region (H-T-H motif).

This sequence belongs to the LysR transcriptional regulatory family.

In terms of biological role, transcriptional activator of the cysJI operon which is involved in sulfur assimilation. Also negatively regulates its own transcription. In Bacillus subtilis (strain 168), this protein is HTH-type transcriptional regulator CysL (cysL).